A 357-amino-acid chain; its full sequence is Protein RecA (357 aa).

74–81 (GPESSGKT) lines the ATP pocket.

Belongs to the RecA family.

It is found in the cytoplasm. Its function is as follows. Can catalyze the hydrolysis of ATP in the presence of single-stranded DNA, the ATP-dependent uptake of single-stranded DNA by duplex DNA, and the ATP-dependent hybridization of homologous single-stranded DNAs. It interacts with LexA causing its activation and leading to its autocatalytic cleavage. The protein is Protein RecA of Bordetella petrii (strain ATCC BAA-461 / DSM 12804 / CCUG 43448).